Reading from the N-terminus, the 163-residue chain is Nucleotide-binding protein Mmcs_0777 (163 aa).

It belongs to the YajQ family.

In terms of biological role, nucleotide-binding protein. The protein is Nucleotide-binding protein Mmcs_0777 of Mycobacterium sp. (strain MCS).